The sequence spans 2541 residues: Talin-1 (2541 aa).

In terms of domain architecture, FERM spans 86-403 (RPLKIRMLDG…GYIDIILKKK (318 aa)). Residue Thr-167 is modified to Phosphothreonine. The interaction with LAYN stretch occupies residues 280–435 (FQAHKNCGQM…PKKSTVLQQQ (156 aa)). Phosphoserine occurs at positions 405, 425, 446, 620, and 729. The helical bundle R1 stretch occupies residues 482–655 (RGHMPPLTSA…QASGELLQQI (174 aa)). The segment at 656-786 (GESDTDPHFQ…ALNELLQHVK (131 aa)) is helical bundle R2. Residues 787–911 (AHATGAGPAG…NAAAQNAIKK (125 aa)) are helical bundle R3. The segment at 913 to 1044 (LVQRLEHAAK…RTAAQKAQEA (132 aa)) is helical bundle R4. Ser-1021 bears the Phosphoserine mark. Residues 1046 to 1206 (GPLEMDSALS…NRCVSCLPGQ (161 aa)) form a helical bundle R5 region. At Tyr-1116 the chain carries Phosphotyrosine. The residue at position 1142 (Thr-1142) is a Phosphothreonine. 2 positions are modified to phosphoserine: Ser-1201 and Ser-1225. Residues 1207 to 1357 (RDVDNALRAV…QLITMCTQQA (151 aa)) are helical bundle R6. Thr-1263 carries the phosphothreonine modification. Ser-1323 carries the phosphoserine modification. Residues 1327 to 1948 (AAPNLKSQLA…CSPSDAYTKK (622 aa)) are interaction with SYNM. The tract at residues 1358-1453 (PGQKECDNAL…AYLVGVSDPN (96 aa)) is helical bundle R7A. The tract at residues 1359–1659 (GQKECDNALR…SMRDKAPGQL (301 aa)) is interaction with VCL and F-actin. A helical bundle R8 region spans residues 1461–1580 (LVEPTQFARA…NLSAFASNPE (120 aa)). N6-acetyllysine is present on Lys-1544. The segment at 1581 to 1653 (FSSIPAQISP…IKKLITSMRD (73 aa)) is helical bundle R7B. A helical bundle R9 region spans residues 1655 to 1822 (APGQLECETA…TLNEAASAAG (168 aa)). The segment at 1823-1973 (VVGGMVDSIT…VLAALQAGNR (151 aa)) is helical bundle R10. Ser-1849 carries the post-translational modification Phosphoserine. Thr-1855 carries the post-translational modification Phosphothreonine. Ser-1878 is subject to Phosphoserine. The tract at residues 1974-2140 (GTQACITAAS…TVKAVEDEAT (167 aa)) is helical bundle R11. An N6-acetyllysine modification is found at Lys-2031. Ser-2040 bears the Phosphoserine mark. At Lys-2115 the chain carries N6-acetyllysine. The segment at 2141-2294 (KGTRALEATT…QAAEAMKGTE (154 aa)) is helical bundle R12. An I/LWEQ domain is found at 2293-2533 (TEWVDPEDPT…QIRQQQYKFL (241 aa)). The helical bundle R13 stretch occupies residues 2300 to 2482 (DPTVIAENEL…AAQKAAAFEE (183 aa)).

Part of a complex composed of THSD1, PTK2/FAK1, TLN1 and VCL. Interacts with THSD1; this promotes interaction with PTK2/FAK1 and VCL. Binds with high affinity to VCL and with low affinity to integrins. Interacts with APBB1IP; this inhibits VCL binding. Interacts with PTK2/FAK1. Interacts with PIP5K1C and NRAP. Interacts with LAYN. Interacts with SYNM. Interacts with ITGB1; the interaction is prevented by competitive binding of ITGB1BP1. Interacts with SVEP1. Interacts (via R7 domain) with KANK1 or KANK2 (via KN motif); this interaction likely initiates the assembly of cortical microtubule stabilization complexes (CMSCs) at the vicinity of focal adhesions. In terms of assembly, interacts with VCL; shows reduced VCL binding compared to isoform 2. Interacts with APBB1IP; shows similar level of binding compared to isoform 2. As to quaternary structure, interacts with VCL; shows enhanced VCL binding compared to isoform 1. Interacts with APBB1IP; shows similar level of binding compared to isoform 1. (Microbial infection) Interacts with human cytomegalovirus protein UL135. In terms of tissue distribution, expressed at low to non-detectable levels in many tissues but highly expressed in skin and pancreas with other tissues including kidney cortex, endocervix, testis, pituitary, liver, and spleen also showing robust expression.

The protein resides in the cell projection. Its subcellular location is the ruffle membrane. It is found in the cytoplasm. It localises to the cytoskeleton. The protein localises to the cell surface. The protein resides in the cell junction. Its subcellular location is the focal adhesion. High molecular weight cytoskeletal protein concentrated at regions of cell-matrix and cell-cell contacts. Involved in connections of major cytoskeletal structures to the plasma membrane. With KANK1 co-organize the assembly of cortical microtubule stabilizing complexes (CMSCs) positioned to control microtubule-actin crosstalk at focal adhesions (FAs) rims. The sequence is that of Talin-1 (TLN1) from Homo sapiens (Human).